The sequence spans 434 residues: Enolase (434 aa).

(2R)-2-phosphoglycerate is bound at residue Gln-163. The active-site Proton donor is Glu-205. Mg(2+) is bound by residues Asp-242, Glu-291, and Asp-318. Lys-343, Arg-372, Ser-373, and Lys-394 together coordinate (2R)-2-phosphoglycerate. Residue Lys-343 is the Proton acceptor of the active site.

It belongs to the enolase family. Mg(2+) serves as cofactor.

It localises to the cytoplasm. The protein localises to the secreted. Its subcellular location is the cell surface. It carries out the reaction (2R)-2-phosphoglycerate = phosphoenolpyruvate + H2O. Its pathway is carbohydrate degradation; glycolysis; pyruvate from D-glyceraldehyde 3-phosphate: step 4/5. Catalyzes the reversible conversion of 2-phosphoglycerate (2-PG) into phosphoenolpyruvate (PEP). It is essential for the degradation of carbohydrates via glycolysis. The polypeptide is Enolase (Streptococcus thermophilus (strain ATCC BAA-491 / LMD-9)).